The chain runs to 510 residues: Anaerobic nitric oxide reductase transcription regulator NorR (510 aa).

In terms of domain architecture, Sigma-54 factor interaction spans 188–417 (IIGNSQGMRT…LEHVIKRAAV (230 aa)). Residues 216-223 (GETGVGKE) and 279-288 (ADGGTLFLDE) each bind ATP. Positions 486–505 (WAATARQLELDSGNLHRLAK) form a DNA-binding region, H-T-H motif.

Its pathway is nitrogen metabolism; nitric oxide reduction. Its function is as follows. Required for the expression of anaerobic nitric oxide (NO) reductase, acts as a transcriptional activator for at least the norVW operon. Activation also requires sigma-54. This chain is Anaerobic nitric oxide reductase transcription regulator NorR, found in Vibrio vulnificus (strain YJ016).